Consider the following 234-residue polypeptide: MSRLLPLLGSRTARSLRPGPAAAPRLPSWCCCGRGLLALGVPGGPRLLGTHPKKEPMEALNTAQGARDFIYSLHSTERSCLLKELHRFESIAIAQEKLEALPPTPGQLRYVFFHNAIPFVGFGFLDNAIMIVAGTQIELSIGIILGISTMAAAALGNLVSDLAGLGLAGYVEALASRLGLSIPDLTPKQVDMWQTRVSTHLGKAVGVTIGCILGMFPLIFFGGSEEDEKLETTN.

A mitochondrion-targeting transit peptide spans 1-55 (MSRLLPLLGSRTARSLRPGPAAAPRLPSWCCCGRGLLALGVPGGPRLLGTHPKKE). Residues 56-110 (PMEALNTAQGARDFIYSLHSTERSCLLKELHRFESIAIAQEKLEALPPTPGQLRY) are Cytoplasmic-facing. Residues 111–131 (VFFHNAIPFVGFGFLDNAIMI) form a helical membrane-spanning segment. The Extracellular portion of the chain corresponds to 132 to 138 (VAGTQIE). The chain crosses the membrane as a helical span at residues 139 to 159 (LSIGIILGISTMAAAALGNLV). Over 160-203 (SDLAGLGLAGYVEALASRLGLSIPDLTPKQVDMWQTRVSTHLGK) the chain is Cytoplasmic. Residues 204-224 (AVGVTIGCILGMFPLIFFGGS) traverse the membrane as a helical segment. The Extracellular segment spans residues 225-234 (EEDEKLETTN).

As to quaternary structure, monomer. Homodimer. Interacts with GJA1. Interacts weakly with DSP. Interacts with SCN1B. Predominantly expressed in the ventricular tissue (at protein level).

It is found in the cell membrane. The protein localises to the mitochondrion inner membrane. Its function is as follows. Essential for maintaining proper cardiac intercalated disk (ICD) structure and function as well as cardiac conduction velocity in the heart. Its association with SCN1B is required for stabilizing the perinexus in the ICD and for localization of GJA1 and SCN5A to the ICD. May regulate the function of the gap junction protein GJA1 and may contribute to the stability and proper localization of GJA1 to cardiac intercalated disk thereby regulating gap junction communication. Regulates mitochondrial respiration and mitochondrial DNA copy number maintenance. The chain is Transmembrane protein 65 (Tmem65) from Mus musculus (Mouse).